Reading from the N-terminus, the 601-residue chain is Glutathione-regulated potassium-efflux system protein KefB (601 aa).

Transmembrane regions (helical) follow at residues 4–24, 29–49, 55–75, 87–107, 111–131, 152–172, 177–197, 207–227, 230–250, 262–282, 284–304, 324–344, and 356–376; these read ADLL…VPLA, IGAV…GLGF, EILH…GLEL, IFGV…GLLM, FLWQ…TAMA, VLLF…LLAG, HFDW…LIGG, FIAA…LVLS, LFMD…GVLL, AIDP…GMSL, LGVL…LVVI, MQFA…FSTA, and ALLL…MKGI. In terms of domain architecture, RCK N-terminal spans 400-519; the sequence is KPQVIVVGFG…AGVTQFSRET (120 aa).

The protein belongs to the monovalent cation:proton antiporter 2 (CPA2) transporter (TC 2.A.37) family. KefB subfamily. In terms of assembly, interacts with the regulatory subunit KefG.

It is found in the cell inner membrane. In terms of biological role, pore-forming subunit of a potassium efflux system that confers protection against electrophiles. Catalyzes K(+)/H(+) antiport. In Salmonella paratyphi C (strain RKS4594), this protein is Glutathione-regulated potassium-efflux system protein KefB.